The following is an 83-amino-acid chain: MKVQHKKELKFYCIVTIPSAFVVLTVISFLLQEITFPVTASAFLNASWHNLLFLIPFGLFFYPVHIWMKREFGRWNDTEKKRG.

2 consecutive transmembrane segments (helical) span residues 11 to 31 and 48 to 68; these read FYCI…SFLL and WHNL…HIWM.

Its subcellular location is the cell membrane. This is an uncharacterized protein from Bacillus subtilis (strain 168).